We begin with the raw amino-acid sequence, 826 residues long: G-protein coupled receptor-associated sorting protein 2 (826 aa).

Disordered regions lie at residues 1 to 126 (MTGA…AQAW), 204 to 286 (WCYP…NPFC), 336 to 371 (EGNR…QESR), and 506 to 534 (IPEG…DSVA). Residues 13–31 (KPDKKPQEEVAGGAERESE) show a composition bias toward basic and acidic residues. A compositionally biased stretch (polar residues) spans 59–73 (SSRARPKTETQSVSG). Over residues 231–247 (TREETSIRSWPREEVNT) the composition is skewed to basic and acidic residues. The span at 248 to 264 (RSRHRAKHQTNARSKPR) shows a compositional bias: basic residues. Ser275 and Ser277 each carry phosphoserine.

The protein belongs to the GPRASP family. As to quaternary structure, interacts with cytoplasmic tails of a variety of G-protein coupled receptors such as muscarinic acetylcholine receptor M1/CHRM1 and calcitonin receptor/CALCR. In terms of tissue distribution, strongly expressed in the brain and the cochlea. Also in lung and muscle tissues. Localized in multiple structures of the cochlea, detected in the spiral ganglion, stria vascularis, spiral ligament, inner and outer hair cells.

Functionally, may play a role in regulation of a variety of G-protein coupled receptors. This Mus musculus (Mouse) protein is G-protein coupled receptor-associated sorting protein 2 (Gprasp2).